The chain runs to 107 residues: UPF0060 membrane protein mll7841 (107 aa).

4 helical membrane passes run 4–24 (LFYTAAALAEIAGCFSVWAWW), 30–50 (PLWLAPGFVSLLLFAWLLALV), 60–80 (AAYGGIYIAASLAWLWLVEGV), and 87–107 (LAGAALCIAGASLILLAPRGA).

It belongs to the UPF0060 family.

The protein resides in the cell inner membrane. This Mesorhizobium japonicum (strain LMG 29417 / CECT 9101 / MAFF 303099) (Mesorhizobium loti (strain MAFF 303099)) protein is UPF0060 membrane protein mll7841.